Reading from the N-terminus, the 34-residue chain is Somatostatin (34 aa).

A disordered region spans residues 1 to 20 (AVERPRQDGQVHEPPGRERK). Cysteines 23 and 34 form a disulfide.

This sequence belongs to the somatostatin family.

Its subcellular location is the secreted. Its function is as follows. Somatostatin inhibits the release of somatotropin. This Myxine glutinosa (Atlantic hagfish) protein is Somatostatin (sst).